The chain runs to 242 residues: Arginine transport ATP-binding protein ArtP (242 aa).

One can recognise an ABC transporter domain in the interval 3–241 (IQLNGINCFY…QTEAFKNYLS (239 aa)). 35–42 (GPSGAGKS) is a binding site for ATP.

The protein belongs to the ABC transporter superfamily. In terms of assembly, the complex is composed of two ATP-binding proteins (ArtP), two transmembrane proteins (ArtM and ArtQ) and two solute-binding proteins (ArtJ and ArtI).

The protein resides in the cell inner membrane. The catalysed reaction is a polar amino acid(out) + ATP + H2O = a polar amino acid(in) + ADP + phosphate + H(+). The enzyme catalyses L-arginine(out) + ATP + H2O = L-arginine(in) + ADP + phosphate + H(+). In terms of biological role, part of the ABC transporter complex ArtPIQMJ involved in arginine transport. Probably responsible for energy coupling to the transport system. The chain is Arginine transport ATP-binding protein ArtP (artP) from Escherichia coli O157:H7.